The following is a 505-amino-acid chain: Maturase K (505 aa).

This sequence belongs to the intron maturase 2 family. MatK subfamily.

It localises to the plastid. The protein localises to the chloroplast. Functionally, usually encoded in the trnK tRNA gene intron. Probably assists in splicing its own and other chloroplast group II introns. This Dioon edule (Virgin's palm) protein is Maturase K.